Consider the following 245-residue polypeptide: Pathogenesis-related thaumatin-like protein 3.6 (245 aa).

Residues Gly1–Gly19 form the signal peptide. Intrachain disulfides connect Cys33–Cys226, Cys74–Cys84, Cys89–Cys95, Cys142–Cys215, Cys148–Cys198, Cys156–Cys166, Cys170–Cys179, and Cys180–Cys185. A glycan (N-linked (GlcNAc...) asparagine) is linked at Asn90. N-linked (GlcNAc...) asparagine glycosylation occurs at Asn186.

The protein belongs to the thaumatin family. Mostly expressed in strobili, and, to a lower extent, in roots of seedlings and saplings.

Functionally, may be involved in disease resistance. The polypeptide is Pathogenesis-related thaumatin-like protein 3.6 (Cryptomeria japonica (Japanese cedar)).